The following is a 398-amino-acid chain: Inositol polyphosphate 5-phosphatase (398 aa).

This sequence belongs to the inositol 1,4,5-trisphosphate 5-phosphatase type II family. In terms of tissue distribution, expressed in tail, cilia, dendrites, axon and male head.

It localises to the cytoplasm. Dephosphorylates a number of phosphatidylinositols. Controls the cellular levels and subcellular distribution of phosphatidylinositol 3,5-bisphosphate and phosphatidylinositol 3,4,5-trisphosphate. Has a role in sperm activation and motility. Influences the localization of the transient receptor potential polycystin (TRPP) complex proteins lov-1 and pkd-2. The chain is Inositol polyphosphate 5-phosphatase from Caenorhabditis elegans.